Here is a 109-residue protein sequence, read N- to C-terminus: Translation initiation factor IF-1, chloroplastic (109 aa).

The 76-residue stretch at 18–93 folds into the S1-like domain; that stretch reads KSLNQEKENL…TRGRIIYRLK (76 aa).

The protein belongs to the IF-1 family. Component of the 30S ribosomal translation pre-initiation complex which assembles on the 30S ribosome in the order IF-2 and IF-3, IF-1 and N-formylmethionyl-tRNA(fMet); mRNA recruitment can occur at any time during PIC assembly.

It localises to the plastid. The protein localises to the chloroplast. One of the essential components for the initiation of protein synthesis. Stabilizes the binding of IF-2 and IF-3 on the 30S subunit to which N-formylmethionyl-tRNA(fMet) subsequently binds. Helps modulate mRNA selection, yielding the 30S pre-initiation complex (PIC). Upon addition of the 50S ribosomal subunit IF-1, IF-2 and IF-3 are released leaving the mature 70S translation initiation complex. The protein is Translation initiation factor IF-1, chloroplastic of Tupiella akineta (Green alga).